We begin with the raw amino-acid sequence, 943 residues long: Translation initiation factor IF-2 (943 aa).

2 disordered regions span residues 96 to 229 and 243 to 352; these read FIKR…ERRR and AAPK…QRQQ. Residues 104-116 are compositionally biased toward low complexity; sequence DAPSDAAESAPSA. Basic and acidic residues-rich tracts occupy residues 120–163 and 171–229; these read ELVR…EERA and AEKK…ERRR. The span at 278 to 293 shows a compositional bias: low complexity; the sequence is ATGSGTGARAAAPSAP. The segment covering 313-323 has biased composition (basic and acidic residues); that stretch reads TTKKKEIKTRG. The region spanning 443–612 is the tr-type G domain; sequence SRAPVVTVMG…LLQAEVLELK (170 aa). Residues 452–459 are G1; it reads GHVDHGKT. 452-459 is a binding site for GTP; that stretch reads GHVDHGKT. Residues 477-481 form a G2 region; that stretch reads GITQH. The G3 stretch occupies residues 498 to 501; sequence DTPG. GTP contacts are provided by residues 498 to 502 and 552 to 555; these read DTPGH and TKAD. The tract at residues 552–555 is G4; sequence TKAD. Positions 588–590 are G5; sequence SSK.

It belongs to the TRAFAC class translation factor GTPase superfamily. Classic translation factor GTPase family. IF-2 subfamily.

Its subcellular location is the cytoplasm. One of the essential components for the initiation of protein synthesis. Protects formylmethionyl-tRNA from spontaneous hydrolysis and promotes its binding to the 30S ribosomal subunits. Also involved in the hydrolysis of GTP during the formation of the 70S ribosomal complex. This chain is Translation initiation factor IF-2, found in Acidovorax sp. (strain JS42).